Reading from the N-terminus, the 197-residue chain is uncharacterized protein (197 aa).

A helical membrane pass occupies residues 150 to 172 (SLKLNTTLPMFALNLICLLRSIL).

It is found in the membrane. This is an uncharacterized protein from Saccharomyces cerevisiae (strain ATCC 204508 / S288c) (Baker's yeast).